Here is a 307-residue protein sequence, read N- to C-terminus: Glutenin, low molecular weight subunit 1D1 (307 aa).

Residues 1–23 (MKTFLVFALLAVAATSAIAQMET) form the signal peptide. Disordered stretches follow at residues 31–88 (RPWQ…ILPQ) and 105–126 (PFSQ…QQQQ). Over residues 43 to 88 (TFPQQPLFSQQQQQQLFPQQPSFSQQQPPFWQQQPPFSQQQPILPQ) the composition is skewed to low complexity.

It belongs to the gliadin/glutenin family. As to quaternary structure, disulfide-bridge linked aggregates. Expressed in endosperm, but not in husk and leaf tissues.

Functionally, glutenins are high-molecular weight seed storage proteins of wheat endosperm. Thought to be responsible for the visco-elastic property of wheat dough. The protein is Glutenin, low molecular weight subunit 1D1 of Triticum aestivum (Wheat).